The following is a 217-amino-acid chain: MTAPLTLALSKGRIFEETLPLLAAAGVQVAEDPETSRKLILPTTDPNLRVIIVRASDVPTYVEYGAADFGVAGKDVLVEHGGSGLYQPIDLNIARCRMSVAVPAGFDYANAVRQGARLRVATKYVETAREHFAAKGVHVDLIKLYGSMELAPLVGLADAIVDLVSSGGTLKANNLVEVEEIMAISSRLVVNQAALKLKRAALKPFLDAFERASQNGV.

Belongs to the ATP phosphoribosyltransferase family. Short subfamily. As to quaternary structure, heteromultimer composed of HisG and HisZ subunits.

It localises to the cytoplasm. The enzyme catalyses 1-(5-phospho-beta-D-ribosyl)-ATP + diphosphate = 5-phospho-alpha-D-ribose 1-diphosphate + ATP. It functions in the pathway amino-acid biosynthesis; L-histidine biosynthesis; L-histidine from 5-phospho-alpha-D-ribose 1-diphosphate: step 1/9. Functionally, catalyzes the condensation of ATP and 5-phosphoribose 1-diphosphate to form N'-(5'-phosphoribosyl)-ATP (PR-ATP). Has a crucial role in the pathway because the rate of histidine biosynthesis seems to be controlled primarily by regulation of HisG enzymatic activity. This is ATP phosphoribosyltransferase from Burkholderia multivorans (strain ATCC 17616 / 249).